Reading from the N-terminus, the 498-residue chain is ATP synthase subunit beta, chloroplastic (498 aa).

Threonine 6 is subject to Phosphothreonine. Serine 13 carries the post-translational modification Phosphoserine. An ATP-binding site is contributed by 172–179 (GGAGVGKT).

The protein belongs to the ATPase alpha/beta chains family. In terms of assembly, F-type ATPases have 2 components, CF(1) - the catalytic core - and CF(0) - the membrane proton channel. CF(1) has five subunits: alpha(3), beta(3), gamma(1), delta(1), epsilon(1). CF(0) has four main subunits: a(1), b(1), b'(1) and c(9-12).

It is found in the plastid. The protein localises to the chloroplast thylakoid membrane. The enzyme catalyses ATP + H2O + 4 H(+)(in) = ADP + phosphate + 5 H(+)(out). Produces ATP from ADP in the presence of a proton gradient across the membrane. The catalytic sites are hosted primarily by the beta subunits. In Crucihimalaya wallichii (Rock-cress), this protein is ATP synthase subunit beta, chloroplastic.